The sequence spans 187 residues: Small ribosomal subunit protein uS4 (187 aa).

Residues 105–174 (RRLQTLVFRK…DNHPERAKIV (70 aa)) form the S4 RNA-binding domain.

The protein belongs to the universal ribosomal protein uS4 family. As to quaternary structure, part of the 30S ribosomal subunit. Contacts protein S5. The interaction surface between S4 and S5 is involved in control of translational fidelity.

One of the primary rRNA binding proteins, it binds directly to 16S rRNA where it nucleates assembly of the body of the 30S subunit. Functionally, with S5 and S12 plays an important role in translational accuracy. The chain is Small ribosomal subunit protein uS4 from Methanocaldococcus jannaschii (strain ATCC 43067 / DSM 2661 / JAL-1 / JCM 10045 / NBRC 100440) (Methanococcus jannaschii).